The following is a 1583-amino-acid chain: MEAQAHSSTATERKKAENSIGKCPTRTDVSEKAVASSTTSNEDESPGQIYHRERRNAITMQPQSVQGLNKISEEPSTSSDERASLIKKEIHGSLPHLAEPSLPYRGTVFAMDPRNGYMEPHYHPPHLFPAFHPPVPIDARHHEGRYHYDPSPIPPLHVPSALSSSPTYPDLPFIRISPHRNPTAASESPFSPPHPYINPYMDYIRSLHSSPSLSMISAARGLSPTDAPHAGVSPAEYYHQMALLTGQRSPYADILPSAATAGAGAIHMEYLHAMDSTRFPSPRLSARPSRKRTLSISPLSDHSFDLQTMIRTSPNSLVTILNNSRSSSSASGSYGHLSASAISPALSFTYPSAPVSLHMHQQILSRQQSLGSAFGHSPPLIHPAPTFPTQRPIPGIPTVLNPVQVSSGPSESSQSKPTSESAVSSTGDPMHNKRSKIKPDEDLPSPGSRGQQEQPEGTTLVKEEADKDESKQEPEVIYETNCHWEGCTREFDTQDQLVHHINNDHIHGEKKEFVCRWLDCSREQKPFKAQYMLVVHMRRHTGEKPHKCTFEGCTKAYSRLENLKTHLRSHTGEKPYVCEHEGCNKAFSNASDRAKHQNRTHSNEKPYVCKIPGCTKRYTDPSSLRKHVKTVHGPEAHVTKKQRGDMHPRPPPPRDSGSHSQSRSPGRPTQGAFGEQKELSNTTSKREECLQVKTVKAEKPMTSQPSPGGQSSCSSQQSPISNYSNSGLELPLTDGGSVADLSAIDETPIMDSTISTATTALALQARRNPAGTKWMEHIKLERLKQVNGMFPRLNPILPSKAPAVSPLIGNGTQSNNNYSSGGPGTLLPSRSDLSGVDFTVLNTLNRRDSNTSTISSAYLSSRRSSGISPCFSSRRSSEASQAEGRPQNVSVADSYDPISTDASRRSSEASQGDGLPSLLSLTPVQQYRLKAKYAAATGGPPPTPLPHMERLSLKTKMALLGEGRDSGVTLPPVHPPRRCSDGGGHTYRGRHLMPHDALANSVRRASDPVRTVSENMSLARVQRFSSLNSFNPPNLPPSVEKRSLVLQNYTRQESSQPRYFQASPCPPSITENVALEALTMDADANLNDEDLLPDDVVQYLNSQNQTGYGQQLQSGISEDSKVAHEPEDLDLAGLPDSHVGQEYPALEQPCSEGSKTDLPIQWNEVSSGTSDLSSSKLKCGQQRPSAQQPRGFGLYNNMVVHPHNLWKVGTGPAGGYQTLGENSSTYNGPEHFAIHSGDGLGTNGNTFHEQPFKTQQYGSQLNRQPLTSSALDHACGTGIQGSKLKGNSLQENGGLLDFSLSVAPNELAGNTVNGMQTQDQMGQGYIAHQLLSGSMQHQGPSRPGQQVLGQVGATSHINIYQGTESCLPGTQDNSSQPSSMAAIRGYQPCASYGGNRRQAMPRGNLTLQQGQLSDMSQSSRVNSIKMEAQGQSQQLCSTVQNYSGQFYDQTMGFSQQDRKAGSFSLSDANCLLQGNGTENSELLSPGANQVTSTVDSFESHDLEGVQIDFDAIIDDGDHTSLMSGALSPSIIQNLSHSSSRLTTPRASLPFPSLSMGTTNMAIGDMSSLLTSLAEESKFLAVMQ.

Position 1 is an N-acetylmethionine (Met-1). 2 stretches are compositionally biased toward polar residues: residues 1–10 (MEAQAHSSTA) and 58–78 (ITMQ…PSTS). Residues 1–78 (MEAQAHSSTA…NKISEEPSTS (78 aa)) are disordered. Residue Arg-175 is modified to Omega-N-methylarginine. Positions 368–475 (QSLGSAFGHS…DKDESKQEPE (108 aa)) are disordered. Low complexity predominate over residues 403–421 (VQVSSGPSESSQSKPTSES). A Glycyl lysine isopeptide (Lys-Gly) (interchain with G-Cter in SUMO2) cross-link involves residue Lys-438. The segment covering 448 to 457 (SRGQQEQPEG) has biased composition (polar residues). Over residues 461–474 (VKEEADKDESKQEP) the composition is skewed to basic and acidic residues. A Glycyl lysine isopeptide (Lys-Gly) (interchain with G-Cter in SUMO2) cross-link involves residue Lys-462. 5 C2H2-type zinc fingers span residues 480 to 505 (TNCH…NNDH), 513 to 540 (FVCR…MRRH), 546 to 570 (HKCT…LRSH), 576 to 601 (YVCE…NRTH), and 607 to 632 (YVCK…KTVH). Residues 620-728 (DPSSLRKHVK…PISNYSNSGL (109 aa)) form a disordered region. A compositionally biased stretch (basic and acidic residues) spans 632–648 (HGPEAHVTKKQRGDMHP). The residue at position 664 (Ser-664) is a Phosphoserine. The span at 684 to 699 (SKREECLQVKTVKAEK) shows a compositional bias: basic and acidic residues. Residues 703–726 (SQPSPGGQSSCSSQQSPISNYSNS) are compositionally biased toward low complexity. The tract at residues 745–845 (DETPIMDSTI…VDFTVLNTLN (101 aa)) is mediates interaction with DZIP1. Residue Lys-773 forms a Glycyl lysine isopeptide (Lys-Gly) (interchain with G-Cter in ubiquitin) linkage. Lys-779 is covalently cross-linked (Glycyl lysine isopeptide (Lys-Gly) (interchain with G-Cter in SUMO2); alternate). Lys-779 is covalently cross-linked (Glycyl lysine isopeptide (Lys-Gly) (interchain with G-Cter in ubiquitin); alternate). Residues Lys-784 and Lys-800 each participate in a glycyl lysine isopeptide (Lys-Gly) (interchain with G-Cter in ubiquitin) cross-link. A disordered region spans residues 809-828 (GNGTQSNNNYSSGGPGTLLP). A compositionally biased stretch (polar residues) spans 810-820 (NGTQSNNNYSS). Phosphoserine; by PKA is present on residues Ser-849, Ser-865, Ser-877, Ser-907, Ser-980, and Ser-1006. Low complexity predominate over residues 863–880 (RSSGISPCFSSRRSSEAS). The tract at residues 863–918 (RSSGISPCFSSRRSSEASQAEGRPQNVSVADSYDPISTDASRRSSEASQGDGLPSL) is disordered. The tract at residues 1164 to 1189 (EVSSGTSDLSSSKLKCGQQRPSAQQP) is disordered. The segment covering 1166 to 1175 (SSGTSDLSSS) has biased composition (low complexity).

This sequence belongs to the GLI C2H2-type zinc-finger protein family. In terms of assembly, the phosphorylated form interacts with BTRC. The full-length GLI3 form (GLI3FL) interacts with SUFU and this interaction regulates the formation of either repressor or activator forms of GLI3. Its association with SUFU is regulated by Hh signaling and dissociation of the SUFU-GLI3 interaction requires the presence of the ciliary motor KIF3A. Interacts with KIF7. The activator form of GLI3 (GLI3A) but not the repressor form (GLI3R) can interact with TRPS1. Interacts with ZIC1. Interacts with ZIC3 (via C2H2-type domains 3, 4 and 5); the interaction enhances its transcriptional activity. Interacts with WRD11; the interaction associates EMX1 with GLI3. Interacts with DZIP1; retains GLI3 within the cytoplasm. Phosphorylated by DYRK2 (in vitro). Phosphorylated on multiple sites by protein kinase A (PKA) and phosphorylation by PKA primes further phosphorylation by CK1 and GSK3. Phosphorylation is essential for its proteolytic processing. In terms of processing, transcriptional repressor GLI3R, a C-terminally truncated form, is generated from the full-length GLI3 protein (GLI3FL/GLI3-190) through proteolytic processing. This process requires PKA-primed phosphorylation of GLI3, ubiquitination of GLI3 and the presence of BTRC. GLI3FL is complexed with SUFU in the cytoplasm and is maintained in a neutral state. Without the Hh signal, the SUFU-GLI3 complex is recruited to cilia, leading to the efficient processing of GLI3FL into GLI3R. GLI3R formation leads to its dissociation from SUFU, allowing it to translocate into the nucleus, and repress Hh target genes. When Hh signaling is initiated, SUFU dissociates from GLI3FL and this has two consequences. First, GLI3R production is halted. Second, free GLI3FL translocates to the nucleus, where it is phosphorylated, destabilized, and converted to a transcriptional activator (GLI3A). Phosphorylated in vitro by ULK3.

The protein localises to the nucleus. Its subcellular location is the cytoplasm. It is found in the cell projection. It localises to the cilium. In terms of biological role, has a dual function as a transcriptional activator and a repressor of the sonic hedgehog (Shh) pathway, and plays a role in limb development. The full-length GLI3 form (GLI3FL) after phosphorylation and nuclear translocation, acts as an activator (GLI3A) while GLI3R, its C-terminally truncated form, acts as a repressor. A proper balance between the GLI3 activator and the repressor GLI3R, rather than the repressor gradient itself or the activator/repressor ratio gradient, specifies limb digit number and identity. In concert with TRPS1, plays a role in regulating the size of the zone of distal chondrocytes, in restricting the zone of PTHLH expression in distal cells and in activating chondrocyte proliferation. Binds to the minimal GLI-consensus sequence 5'-GGGTGGTC-3'. This chain is Transcriptional activator GLI3 (Gli3), found in Mus musculus (Mouse).